Here is a 260-residue protein sequence, read N- to C-terminus: Indole-3-glycerol phosphate synthase (260 aa).

The protein belongs to the TrpC family.

The enzyme catalyses 1-(2-carboxyphenylamino)-1-deoxy-D-ribulose 5-phosphate + H(+) = (1S,2R)-1-C-(indol-3-yl)glycerol 3-phosphate + CO2 + H2O. Its pathway is amino-acid biosynthesis; L-tryptophan biosynthesis; L-tryptophan from chorismate: step 4/5. The sequence is that of Indole-3-glycerol phosphate synthase from Acetivibrio thermocellus (strain ATCC 27405 / DSM 1237 / JCM 9322 / NBRC 103400 / NCIMB 10682 / NRRL B-4536 / VPI 7372) (Clostridium thermocellum).